A 122-amino-acid chain; its full sequence is Histone H2B subacrosomal variant (122 aa).

Residues 1-25 show a composition bias toward basic residues; sequence MARNVTKRNKRCRGHQKAIYKKKSH. The disordered stretch occupies residues 1–30; the sequence is MARNVTKRNKRCRGHQKAIYKKKSHSSSES.

It belongs to the histone H2B family. Testis-specific. Restricted to the spermatid population of seminiferous epithelium. Not present in Sertoli cells, spermatogonia, spermatocytes or cells of the interstitial tissue (at protein level).

It localises to the cytoplasm. May act as an acrosome-nuclear docking protein in sperm. This Bos taurus (Bovine) protein is Histone H2B subacrosomal variant (SUBH2BV).